Here is a 520-residue protein sequence, read N- to C-terminus: GMP synthase [glutamine-hydrolyzing] (520 aa).

Residues 12 to 205 form the Glutamine amidotransferase type-1 domain; that stretch reads KIIVLDYGSQ…AISICGARGD (194 aa). The active-site Nucleophile is the C89. Catalysis depends on residues H179 and E181. One can recognise a GMPS ATP-PPase domain in the interval 206-395; the sequence is WSMDNFIDME…LGMPEEIVWR (190 aa). ATP is bound at residue 233–239; that stretch reads SGGVDSS.

In terms of assembly, homodimer.

It carries out the reaction XMP + L-glutamine + ATP + H2O = GMP + L-glutamate + AMP + diphosphate + 2 H(+). It participates in purine metabolism; GMP biosynthesis; GMP from XMP (L-Gln route): step 1/1. Functionally, catalyzes the synthesis of GMP from XMP. The sequence is that of GMP synthase [glutamine-hydrolyzing] from Streptococcus pyogenes serotype M3 (strain SSI-1).